Reading from the N-terminus, the 163-residue chain is MNLEQLINVLGLLVWIAARAVSRVGPHGSGLVYRELHDFYGYLQLDLLGPVVAGNRSVRTWREQADRARGTFAWRSGLNTSRILPVGSMYRGSDALPAGLYRPEEEVFLLLNRCHGPLSTPKNACLAEVGVANATFLSRFNVGDFHGASWENGTAPDGEPGVC.

A signal peptide spans 1–22 (MNLEQLINVLGLLVWIAARAVS).

Belongs to the HHV-5 US34 protein family.

This is Protein US34 (US34) from Homo sapiens (Human).